A 315-amino-acid polypeptide reads, in one-letter code: Probable NAD(P)H-dependent D-xylose reductase xyl1 (315 aa).

Tyr-50 serves as the catalytic Proton donor. His-112 serves as a coordination point for substrate. NAD(+) is bound by residues 166-167, 215-224, and 271-281; these read SN, SSFGPLSFVE, and KSNDPTRLAQN.

This sequence belongs to the aldo/keto reductase family.

It catalyses the reaction xylitol + NAD(+) = D-xylose + NADH + H(+). It carries out the reaction xylitol + NADP(+) = D-xylose + NADPH + H(+). Its pathway is carbohydrate metabolism; D-xylose degradation. In terms of biological role, catalyzes the initial reaction in the xylose utilization pathway by reducing D-xylose into xylitol. Xylose is a major component of hemicelluloses such as xylan. Most fungi utilize D-xylose via three enzymatic reactions, xylose reductase (XR), xylitol dehydrogenase (XDH), and xylulokinase, to form xylulose 5-phosphate, which enters pentose phosphate pathway. This is Probable NAD(P)H-dependent D-xylose reductase xyl1 (xyl1) from Aspergillus fumigatus (strain ATCC MYA-4609 / CBS 101355 / FGSC A1100 / Af293) (Neosartorya fumigata).